A 272-amino-acid polypeptide reads, in one-letter code: Glutamate 5-kinase (272 aa).

Residue lysine 15 participates in ATP binding. Residues serine 55, aspartate 142, and asparagine 158 each contribute to the substrate site. ATP-binding positions include serine 178 to aspartate 179 and threonine 220 to lysine 226.

This sequence belongs to the glutamate 5-kinase family.

Its subcellular location is the cytoplasm. The catalysed reaction is L-glutamate + ATP = L-glutamyl 5-phosphate + ADP. Its pathway is amino-acid biosynthesis; L-proline biosynthesis; L-glutamate 5-semialdehyde from L-glutamate: step 1/2. Catalyzes the transfer of a phosphate group to glutamate to form L-glutamate 5-phosphate. This is Glutamate 5-kinase from Streptococcus equi subsp. zooepidemicus (strain H70).